A 108-amino-acid chain; its full sequence is Small ribosomal subunit protein bS6 (108 aa).

It belongs to the bacterial ribosomal protein bS6 family.

Functionally, binds together with bS18 to 16S ribosomal RNA. The polypeptide is Small ribosomal subunit protein bS6 (Nostoc sp. (strain PCC 7120 / SAG 25.82 / UTEX 2576)).